We begin with the raw amino-acid sequence, 367 residues long: Glutamate 5-kinase (367 aa).

Lys10 contributes to the ATP binding site. Residues Ser50, Asp137, and Asn149 each coordinate substrate. ATP contacts are provided by residues 169–170 (TD) and 211–217 (TGGMGTK). The PUA domain occupies 275 to 353 (AGEITVDDGA…QEISEILGYE (79 aa)).

Belongs to the glutamate 5-kinase family.

It localises to the cytoplasm. It carries out the reaction L-glutamate + ATP = L-glutamyl 5-phosphate + ADP. Its pathway is amino-acid biosynthesis; L-proline biosynthesis; L-glutamate 5-semialdehyde from L-glutamate: step 1/2. With respect to regulation, proline-mediated feedback inhibition. In terms of biological role, catalyzes the transfer of a phosphate group to glutamate to form L-glutamate 5-phosphate. The chain is Glutamate 5-kinase from Serratia marcescens.